Reading from the N-terminus, the 1296-residue chain is DNA-directed RNA polymerase subunit beta' (1296 aa).

Zn(2+)-binding residues include C60, C62, C75, and C78. Positions 185 to 202 (EEEGGKAAEKRKLRDSAD) are enriched in basic and acidic residues. Residues 185–204 (EEEGGKAAEKRKLRDSADRQ) are disordered. Mg(2+) contacts are provided by D535, D537, and D539. C877, C954, C961, and C964 together coordinate Zn(2+).

This sequence belongs to the RNA polymerase beta' chain family. The RNAP catalytic core consists of 2 alpha, 1 beta, 1 beta' and 1 omega subunit. When a sigma factor is associated with the core the holoenzyme is formed, which can initiate transcription. Requires Mg(2+) as cofactor. It depends on Zn(2+) as a cofactor.

The enzyme catalyses RNA(n) + a ribonucleoside 5'-triphosphate = RNA(n+1) + diphosphate. DNA-dependent RNA polymerase catalyzes the transcription of DNA into RNA using the four ribonucleoside triphosphates as substrates. This is DNA-directed RNA polymerase subunit beta' from Kocuria rhizophila (strain ATCC 9341 / DSM 348 / NBRC 103217 / DC2201).